Reading from the N-terminus, the 342-residue chain is S-adenosyl-L-methionine-dependent tRNA 4-demethylwyosine synthase (342 aa).

[4Fe-4S] cluster-binding residues include C45, C58, C71, C81, C85, and C88. One can recognise a Radical SAM core domain in the interval 64 to 312; that stretch reads YGIHSHRCLQ…VKHLPGYHIE (249 aa).

Belongs to the TYW1 family. In terms of assembly, monomer. [4Fe-4S] cluster is required as a cofactor.

It is found in the cytoplasm. It carries out the reaction N(1)-methylguanosine(37) in tRNA(Phe) + pyruvate + S-adenosyl-L-methionine = 4-demethylwyosine(37) in tRNA(Phe) + 5'-deoxyadenosine + L-methionine + CO2 + H2O. In terms of biological role, component of the wyosine derivatives biosynthesis pathway that catalyzes the condensation of N-methylguanine with 2 carbon atoms from pyruvate to form the tricyclic 4-demethylwyosine (imG-14) on guanosine-37 of tRNA(Phe). The chain is S-adenosyl-L-methionine-dependent tRNA 4-demethylwyosine synthase from Pyrococcus abyssi (strain GE5 / Orsay).